A 209-amino-acid chain; its full sequence is Phosphopantothenoylcysteine decarboxylase (209 aa).

Residues 28–30 (GSV) and 53–55 (TKS) each bind FMN. His90 serves as the catalytic Proton donor. FMN-binding positions include 106-109 (SANT) and Ala140. Positions 142, 172, and 174 each coordinate N-[(R)-4-phosphopantothenoyl]-L-cysteine. The active-site Proton donor is the Cys175. Residue Met183 participates in N-[(R)-4-phosphopantothenoyl]-L-cysteine binding.

Belongs to the HFCD (homooligomeric flavin containing Cys decarboxylase) superfamily. In terms of assembly, homotrimer. FMN is required as a cofactor. In terms of tissue distribution, expressed in roots, shoots, leaves, flowers, developing siliques and seeds with highest expression in seed embryos and phloem.

It carries out the reaction N-[(R)-4-phosphopantothenoyl]-L-cysteine + H(+) = (R)-4'-phosphopantetheine + CO2. The protein operates within cofactor biosynthesis; coenzyme A biosynthesis; CoA from (R)-pantothenate: step 3/5. Involved in plant growth, and salt and osmotic tolerance. Catalyzes the decarboxylation of 4'-phosphopantothenoylcysteine to 4'-phosphopantetheine, a key step in coenzyme A biosynthesis. The enzyme is also able to decarboxylate pantothenoylcysteine to pantothenoylcysteamine. The protein is Phosphopantothenoylcysteine decarboxylase of Arabidopsis thaliana (Mouse-ear cress).